The primary structure comprises 179 residues: Large ribosomal subunit protein uL5 (179 aa).

It belongs to the universal ribosomal protein uL5 family. As to quaternary structure, part of the 50S ribosomal subunit; part of the 5S rRNA/L5/L18/L25 subcomplex. Contacts the 5S rRNA and the P site tRNA. Forms a bridge to the 30S subunit in the 70S ribosome.

Its function is as follows. This is one of the proteins that bind and probably mediate the attachment of the 5S RNA into the large ribosomal subunit, where it forms part of the central protuberance. In the 70S ribosome it contacts protein S13 of the 30S subunit (bridge B1b), connecting the 2 subunits; this bridge is implicated in subunit movement. Contacts the P site tRNA; the 5S rRNA and some of its associated proteins might help stabilize positioning of ribosome-bound tRNAs. The chain is Large ribosomal subunit protein uL5 from Bacillus pumilus (strain SAFR-032).